A 490-amino-acid polypeptide reads, in one-letter code: GTPase Der (490 aa).

EngA-type G domains lie at 3–167 and 203–378; these read FTLA…DAFE and LQVA…EVWN. Residues 9-16, 56-60, 119-122, 209-216, 256-260, and 321-324 contribute to the GTP site; these read GRPNVGKS, DTAGL, NKAE, GRPNAGKS, DTAGM, and NKWD. A KH-like domain is found at 379–465; that stretch reads RRVPTAALNR…RLTMRSQSDA (87 aa). Positions 451-490 are disordered; that stretch reads PGTPIRLTMRSQSDANPYKNRKKSTPSRLRKHLGKPSLKG. Residues 469–484 show a composition bias toward basic residues; that stretch reads KNRKKSTPSRLRKHLG.

It belongs to the TRAFAC class TrmE-Era-EngA-EngB-Septin-like GTPase superfamily. EngA (Der) GTPase family. As to quaternary structure, associates with the 50S ribosomal subunit.

Its function is as follows. GTPase that plays an essential role in the late steps of ribosome biogenesis. The chain is GTPase Der from Dinoroseobacter shibae (strain DSM 16493 / NCIMB 14021 / DFL 12).